Here is a 245-residue protein sequence, read N- to C-terminus: MEGPRGWLVLCVLAISLASMVTEDLCRAPDGKKGEAGRPGRRGRPGLKGEQGEPGAPGIRTGIQGLKGDQGEPGPSGNPGKVGYPGPSGPLGARGIPGIKGTKGSPGNIKDQPRPAFSAIRRNPPMGGNVVIFDTVITNQEEPYQNHSGRFVCTVPGYYYFTFQVLSQWEICLSIVSSSRGQVRRSLGFCDTTNKGLFQVVSGGMVLQLQQGDQVWVEKDPKKGHIYQGSEADSVFSGFLIFPSA.

Positions 1-22 are cleaved as a signal peptide; sequence MEGPRGWLVLCVLAISLASMVT. The span at 27–38 shows a compositional bias: basic and acidic residues; it reads RAPDGKKGEAGR. The disordered stretch occupies residues 27 to 114; the sequence is RAPDGKKGEA…SPGNIKDQPR (88 aa). Residues 31–109 form the Collagen-like domain; sequence GKKGEAGRPG…KGTKGSPGNI (79 aa). The residue at position 33 (lysine 33) is a 5-hydroxylysine. O-linked (Gal...) hydroxylysine glycosylation is present at lysine 33. 2 positions are modified to 4-hydroxyproline: proline 39 and proline 45. A 5-hydroxylysine modification is found at lysine 48. Residue lysine 48 is glycosylated (O-linked (Gal...) hydroxylysine). 4-hydroxyproline is present on residues proline 54 and proline 57. Lysine 67 is modified (5-hydroxylysine). A glycan (O-linked (Gal...) hydroxylysine) is linked at lysine 67. 4-hydroxyproline occurs at positions 73, 79, and 85. Lysine 100 carries the 5-hydroxylysine modification. The O-linked (Gal...) hydroxylysine glycan is linked to lysine 100. The C1q domain occupies 110–245; the sequence is KDQPRPAFSA…FSGFLIFPSA (136 aa). N-linked (GlcNAc...) asparagine glycosylation occurs at asparagine 146. A disulfide bridge links cysteine 172 with cysteine 190. A Ca(2+)-binding site is contributed by glutamine 199.

Core component of the complement C1 complex, a calcium-dependent complex composed of 1 molecule of the C1Q subcomplex, 2 molecules of C1R and 2 molecules of C1S. The C1Q subcomplex is composed 18 subunits: 3 chains of C1QA, C1QB, and C1QC trimerize to form 6 collagen-like triple helices connected to six globular ligand-recognition modules (C1q domain). Interacts with CR1 (via Sushi 24 and Sushi 25 domains). Interacts (via C-terminus) with CD33; this interaction activates CD33 inhibitory motifs. As to quaternary structure, (Microbial infection) Interacts with Staphylococcus aureus protein Cna; this interaction results in the inhibition of the classical complement pathway. Post-translationally, O-linked glycans are assumed to be the Glc-Gal disaccharides typically found as secondary modifications of hydroxylated lysines in collagen-like domains.

The protein resides in the secreted. It localises to the cell surface. With respect to regulation, the C1Q subcomplex is inhibited by sulfated molecules, such as triterpenoid sulfates, heparan sulfate, or chondroitin sulfates. Functionally, core component of the complement C1 complex, a multiprotein complex that initiates the classical pathway of the complement system, a cascade of proteins that leads to phagocytosis and breakdown of pathogens and signaling that strengthens the adaptive immune system. The classical complement pathway is initiated by the C1Q subcomplex of the C1 complex, which specifically binds IgG or IgM immunoglobulins complexed with antigens, forming antigen-antibody complexes on the surface of pathogens: C1QA, together with C1QB and C1QC, specifically recognizes and binds the Fc regions of IgG or IgM via its C1q domain. Immunoglobulin-binding activates the proenzyme C1R, which cleaves C1S, initiating the proteolytic cascade of the complement system. The C1Q subcomplex is activated by a hexamer of IgG complexed with antigens, while it is activated by a pentameric IgM. The C1Q subcomplex also recognizes and binds phosphatidylserine exposed on the surface of cells undergoing programmed cell death, possibly promoting activation of the complement system. The sequence is that of Complement C1q subcomponent subunit A from Homo sapiens (Human).